The primary structure comprises 230 residues: MKKKGLNYLMQVAIDGPASAGKSTVAKIIAHNLGYIYIDTGAMYRACTLIAHDNNVDYGDEKAILNLIDHSTIDFKQEDGEQKVYVNGKDVSIDIRTPEITENVSQVSALRSIREKMVELQREMAGKHDVIMDGRDIGTTVLPDAEVKIFLIASVASRAKRRFLDFQEKGIHQDLKDIEHDIEVRDYKDSHREISPLKKADDAIELDTTNLTIDEVVAKITEIIQKKQKN.

16–24 (GPASAGKST) is an ATP binding site.

It belongs to the cytidylate kinase family. Type 1 subfamily.

It localises to the cytoplasm. It carries out the reaction CMP + ATP = CDP + ADP. It catalyses the reaction dCMP + ATP = dCDP + ADP. The polypeptide is Cytidylate kinase (Lactobacillus johnsonii (strain CNCM I-12250 / La1 / NCC 533)).